Consider the following 82-residue polypeptide: Sodium channel neurotoxin MeuNaTxalpha-3 (82 aa).

Positions 1 to 8 (LVMAGVES) are cleaved as a signal peptide. The region spanning 10-80 (RDGHIARNNN…VPIKVPGDCH (71 aa)) is the LCN-type CS-alpha/beta domain. 4 cysteine pairs are disulfide-bonded: Cys20–Cys79, Cys24–Cys52, Cys38–Cys62, and Cys42–Cys64.

As to expression, expressed by the venom gland.

The protein resides in the secreted. Its function is as follows. Alpha toxins bind voltage-independently at site-3 of sodium channels (Nav) and inhibit the inactivation of the activated channels, thereby blocking neuronal transmission. In Mesobuthus eupeus (Lesser Asian scorpion), this protein is Sodium channel neurotoxin MeuNaTxalpha-3.